Here is a 486-residue protein sequence, read N- to C-terminus: N-succinylglutamate 5-semialdehyde dehydrogenase (486 aa).

Position 220 to 225 (220 to 225 (GSSRTG)) interacts with NAD(+). Residues Glu-243 and Cys-277 contribute to the active site.

The protein belongs to the aldehyde dehydrogenase family. AstD subfamily.

The catalysed reaction is N-succinyl-L-glutamate 5-semialdehyde + NAD(+) + H2O = N-succinyl-L-glutamate + NADH + 2 H(+). It functions in the pathway amino-acid degradation; L-arginine degradation via AST pathway; L-glutamate and succinate from L-arginine: step 4/5. In terms of biological role, catalyzes the NAD-dependent reduction of succinylglutamate semialdehyde into succinylglutamate. This Shewanella halifaxensis (strain HAW-EB4) protein is N-succinylglutamate 5-semialdehyde dehydrogenase.